We begin with the raw amino-acid sequence, 231 residues long: Ribosyldihydronicotinamide dehydrogenase [quinone] (231 aa).

FAD contacts are provided by residues H12, 18–21, and 104–107; these read FNGS and LYWF. 127 to 129 is a binding site for substrate; it reads FDI. FAD-binding positions include 148-151 and Y156; that span reads TTGG. Residues H174 and H178 each coordinate Zn(2+). Position 194 (D194) interacts with FAD. S197 carries the phosphoserine modification. R201 serves as a coordination point for FAD. C223 is a binding site for Zn(2+).

It belongs to the NAD(P)H dehydrogenase (quinone) family. In terms of assembly, homodimer. Requires Zn(2+) as cofactor. It depends on FAD as a cofactor.

Its subcellular location is the cytoplasm. The enzyme catalyses 1-(beta-D-ribofuranosyl)-1,4-dihydronicotinamide + a quinone + H(+) = beta-nicotinamide D-riboside + a quinol. In terms of biological role, the enzyme apparently serves as a quinone reductase in connection with conjugation reactions of hydroquinones involved in detoxification pathways as well as in biosynthetic processes such as the vitamin K-dependent gamma-carboxylation of glutamate residues in prothrombin synthesis. The chain is Ribosyldihydronicotinamide dehydrogenase [quinone] (Nqo2) from Mus musculus (Mouse).